The sequence spans 178 residues: Enhancer of split m5 protein (178 aa).

The region spanning 18 to 73 (YLKVKKPLLERQRRARMNKCLDTLKTLVAEFQGDDAILRMDKAEMLEAALVFMRKQ) is the bHLH domain. The 34-residue stretch at 89–122 (FKNGYMNAVSEISRVMACTPAMSVDVGKTVMTHL) folds into the Orange domain. Residues 135–165 (VQTSVTTSTPRPLSPASSGYHSDNEDSQSAA) show a composition bias toward polar residues. Residues 135–178 (VQTSVTTSTPRPLSPASSGYHSDNEDSQSAASPKPVEETMWRPW) are disordered. Residues 169–178 (PVEETMWRPW) show a composition bias toward basic and acidic residues. Positions 175–178 (WRPW) match the WRPW motif motif.

In terms of assembly, transcription repression requires formation of a complex with a corepressor protein (Groucho). Forms homodimers.

It is found in the nucleus. In terms of biological role, participates in the control of cell fate choice by uncommitted neuroectodermal cells in the embryo. Transcriptional repressor. Binds DNA on N-box motifs: 5'-CACNAG-3'. This chain is Enhancer of split m5 protein, found in Drosophila melanogaster (Fruit fly).